A 544-amino-acid polypeptide reads, in one-letter code: Ceramide glucosyltransferase (544 aa).

At 1 to 15 (MVQEELSLFRITTGY) the chain is on the lumenal side. Residues 16 to 36 (FFLLWYIIILVAAYSGFFEIL) traverse the membrane as a helical segment. At 37 to 427 (FNFRNRPILH…LATLIEPTTE (391 aa)) the chain is on the cytoplasmic side. A short sequence motif (D1) is located at residue D109. A short sequence motif (D2) is located at residue D171. Residue D364 is a short sequence motif, D3. D364 (proton acceptor) is an active-site residue. The (Q/R)XXRW motif lies at 404-408 (RRVRW). The chain crosses the membrane as a helical span at residues 428 to 448 (SIICGIYGTYAISTVFFGTWF). Residues 449-451 (NKY) are Lumenal-facing. A helical transmembrane segment spans residues 452 to 472 (WFVMHMLIWMLTDYVQYHTLI). The Cytoplasmic segment spans residues 473-501 (NHTLDVKNITYLPNWLNESIPPKQRNCLQ). A helical membrane pass occupies residues 502–522 (WGYIWILRELLALPIWIIAMI). Topologically, residues 523-544 (GHEIDWRGRPFRIKKDLTAEEM) are lumenal.

Belongs to the glycosyltransferase 2 family.

The protein resides in the golgi apparatus membrane. It carries out the reaction an N-acylsphing-4-enine + UDP-alpha-D-glucose = a beta-D-glucosyl-(1&lt;-&gt;1')-N-acylsphing-4-enine + UDP + H(+). The protein operates within lipid metabolism; sphingolipid metabolism. Catalyzes the final step in the biosynthesis of the membrane lipid glucosylceramide (GluCer), the transfer of glucose to ceramide. Glucosylceramides play important roles in growth, differentiation and pathogenicity. This is Ceramide glucosyltransferase from Candida albicans (strain SC5314 / ATCC MYA-2876) (Yeast).